Consider the following 73-residue polypeptide: Disintegrin mojastin-2 (73 aa).

The region spanning 1-73 (EAGEECDCGS…ADCPRNGLYG (73 aa)) is the Disintegrin domain. 6 cysteine pairs are disulfide-bonded: Cys6–Cys21, Cys8–Cys16, Cys15–Cys38, Cys29–Cys35, Cys34–Cys59, and Cys47–Cys66. The Cell attachment site signature appears at 51 to 53 (RGD).

This sequence belongs to the venom metalloproteinase (M12B) family. P-II subfamily. P-IIa sub-subfamily. In terms of assembly, monomer (disintegrin). Expressed by the venom gland.

It is found in the secreted. Functionally, inhibits the three processes involved in platelet function (adhesion, activation and aggregation). It inhibits platelet adhesion to fibronectin with an IC(50) of 58.6 nM. It inhibits ATP release from platelet induced by ADP with an IC(50) of 19.5 nM on platelet-rich plasma, probably by binding to ADP receptors (P2RY1 and P2RY12). Finally, it inhibits ADP-induced platelet aggregation with IC(50) of 44.7 nM on platelet-rich plasma and 19.3 nM on whole blood, probably by binding to alpha-IIb/beta-3 (ITGA2B/ITGB3). Its function is as follows. Inhibits ADP-induced platelet aggregation (IC(50) = 13.8 nM) probably by binding to alpha-IIb/beta-3 (ITGA2B/ITGB3) located on the platelet surface. In Crotalus scutulatus scutulatus (Mojave rattlesnake), this protein is Disintegrin mojastin-2.